The following is a 108-amino-acid chain: FK506-binding protein 1 (108 aa).

Residues 20-108 (GDSVTIHYVG…KFEVELLKIN (89 aa)) enclose the PPIase FKBP-type domain.

This sequence belongs to the FKBP-type PPIase family. FKBP1 subfamily.

The protein localises to the cytoplasm. It catalyses the reaction [protein]-peptidylproline (omega=180) = [protein]-peptidylproline (omega=0). Inhibited by both FK506 and rapamycin. Its function is as follows. PPIases accelerate the folding of proteins. It catalyzes the cis-trans isomerization of proline imidic peptide bonds in oligopeptides. This chain is FK506-binding protein 1 (FPR1), found in Cryptococcus neoformans var. neoformans serotype D (strain JEC21 / ATCC MYA-565) (Filobasidiella neoformans).